The chain runs to 197 residues: Phospholipid hydroperoxide glutathione peroxidase (197 aa).

A Phosphoserine modification is found at serine 40. Selenocysteine 73 is a catalytic residue. A non-standard amino acid (selenocysteine) is located at residue selenocysteine 73.

Belongs to the glutathione peroxidase family. Monomer. Has a tendency to form higher mass oligomers. Interacts with FUNDC1; this interaction promotes GPX4 recruitment into mitochondria through TOM/TIM complex where it is degraded by mitophagy. As to expression, expressed in testis. Also expressed in liver, lung, kidney and spinal cord.

The protein resides in the mitochondrion. Its subcellular location is the cytoplasm. The enzyme catalyses a hydroperoxy polyunsaturated fatty acid + 2 glutathione = a hydroxy polyunsaturated fatty acid + glutathione disulfide + H2O. The catalysed reaction is 2 glutathione + H2O2 = glutathione disulfide + 2 H2O. It carries out the reaction tert-butyl hydroperoxide + 2 glutathione = tert-butanol + glutathione disulfide + H2O. It catalyses the reaction cumene hydroperoxide + 2 glutathione = 2-phenylpropan-2-ol + glutathione disulfide + H2O. The enzyme catalyses (9S)-hydroperoxy-(10E,12Z)-octadecadienoate + 2 glutathione = (9S)-hydroxy-(10E,12Z)-octadecadienoate + glutathione disulfide + H2O. The catalysed reaction is (13S)-hydroperoxy-(9Z,11E)-octadecadienoate + 2 glutathione = (13S)-hydroxy-(9Z,11E)-octadecadienoate + glutathione disulfide + H2O. It carries out the reaction (5S)-hydroperoxy-(6E,8Z,11Z,14Z)-eicosatetraenoate + 2 glutathione = (5S)-hydroxy-(6E,8Z,11Z,14Z)-eicosatetraenoate + glutathione disulfide + H2O. It catalyses the reaction (12R)-hydroperoxy-(5Z,8Z,10E,14Z)-eicosatetraenoate + 2 glutathione = (12R)-hydroxy-(5Z,8Z,10E,14Z)-eicosatetraenoate + glutathione disulfide + H2O. The enzyme catalyses (12S)-hydroperoxy-(5Z,8Z,10E,14Z)-eicosatetraenoate + 2 glutathione = (12S)-hydroxy-(5Z,8Z,10E,14Z)-eicosatetraenoate + glutathione disulfide + H2O. The catalysed reaction is (15S)-hydroperoxy-(5Z,8Z,11Z,13E)-eicosatetraenoate + 2 glutathione = (15S)-hydroxy-(5Z,8Z,11Z,13E)-eicosatetraenoate + glutathione disulfide + H2O. It carries out the reaction (5S)-hydroperoxy-(6E,8Z,11Z,14Z,17Z)-eicosapentaenoate + 2 glutathione = (5S)-hydroxy-(6E,8Z,11Z,14Z,17Z)-eicosapentaenoate + glutathione disulfide + H2O. It catalyses the reaction (12S)-hydroperoxy-(5Z,8Z,10E,14Z,17Z)-eicosapentaenoate + 2 glutathione = (12S)-hydroxy-(5Z,8Z,10E,14Z,17Z)-eicosapentaenoate + glutathione disulfide + H2O. The enzyme catalyses (15S)-hydroperoxy-(5Z,8Z,11Z,13E,17Z)-eicosapentaenoate + 2 glutathione = (15S)-hydroxy-(5Z,8Z,11Z,13E,17Z)-eicosapentaenoate + glutathione disulfide + H2O. The catalysed reaction is (15S)-hydroperoxy-(11Z,13E)-eicosadienoate + 2 glutathione = (15S)-hydroxy-(11Z,13E)-eicosadienoate + glutathione disulfide + H2O. It carries out the reaction (17S)-hydroperoxy-(4Z,7Z,10Z,13Z,15E,19Z)-docosahexaenoate + 2 glutathione = (17S)-hydroxy-(4Z,7Z,10Z,13Z,15E,19Z)-docosahexaenoate + glutathione disulfide + H2O. It catalyses the reaction a hydroperoxy-1,2-diacyl-glycero-3-phosphocholine + 2 glutathione = a hydroxy-1,2-diacyl-glycero-3-phosphocholine + glutathione disulfide + H2O. In terms of biological role, essential antioxidant peroxidase that directly reduces phospholipid hydroperoxide even if they are incorporated in membranes and lipoproteins. Can also reduce fatty acid hydroperoxide, cholesterol hydroperoxide and thymine hydroperoxide. Plays a key role in protecting cells from oxidative damage by preventing membrane lipid peroxidation. Required to prevent cells from ferroptosis, a non-apoptotic cell death resulting from an iron-dependent accumulation of lipid reactive oxygen species. The presence of selenocysteine (Sec) versus Cys at the active site is essential for life: it provides resistance to overoxidation and prevents cells against ferroptosis. The presence of Sec at the active site is also essential for the survival of a specific type of parvalbumin-positive interneurons, thereby preventing against fatal epileptic seizures. May be required to protect cells from the toxicity of ingested lipid hydroperoxides. Required for normal sperm development and male fertility. Essential for maturation and survival of photoreceptor cells. Plays a role in a primary T-cell response to viral and parasitic infection by protecting T-cells from ferroptosis and by supporting T-cell expansion. Plays a role of glutathione peroxidase in platelets in the arachidonic acid metabolism. Reduces hydroperoxy ester lipids formed by a 15-lipoxygenase that may play a role as down-regulator of the cellular 15-lipoxygenase pathway. Can also reduce small soluble hydroperoxides such as H2O2, cumene hydroperoxide and tert-butyl hydroperoxide. The chain is Phospholipid hydroperoxide glutathione peroxidase from Callithrix jacchus (White-tufted-ear marmoset).